A 45-amino-acid polypeptide reads, in one-letter code: Natriuretic peptide OsNP-d (45 aa).

A propeptide spanning residues 1 to 5 (PAAGL) is cleaved from the precursor. Cys-14 and Cys-30 are disulfide-bonded.

It belongs to the natriuretic peptide family. As to expression, expressed by the venom gland.

It localises to the secreted. In terms of biological role, snake venom natriuretic peptide that targets both NPR1 and NPR2. Exhibits hypotensive and vasodepressor activities. This Oxyuranus scutellatus scutellatus (Australian taipan) protein is Natriuretic peptide OsNP-d.